Consider the following 509-residue polypeptide: tRNA-2-methylthio-N(6)-dimethylallyladenosine synthase (509 aa).

The segment covering methionine 1 to serine 15 has biased composition (polar residues). Residues methionine 1–tyrosine 26 are disordered. Residues threonine 16–lysine 25 show a composition bias toward basic and acidic residues. An MTTase N-terminal domain is found at arginine 66–phenylalanine 184. [4Fe-4S] cluster-binding residues include cysteine 75, cysteine 111, cysteine 145, cysteine 221, cysteine 225, and cysteine 228. The 231-residue stretch at arginine 207–glutamate 437 folds into the Radical SAM core domain. The 64-residue stretch at asparagine 440 to glutamate 503 folds into the TRAM domain.

This sequence belongs to the methylthiotransferase family. MiaB subfamily. Monomer. Requires [4Fe-4S] cluster as cofactor.

The protein localises to the cytoplasm. The enzyme catalyses N(6)-dimethylallyladenosine(37) in tRNA + (sulfur carrier)-SH + AH2 + 2 S-adenosyl-L-methionine = 2-methylsulfanyl-N(6)-dimethylallyladenosine(37) in tRNA + (sulfur carrier)-H + 5'-deoxyadenosine + L-methionine + A + S-adenosyl-L-homocysteine + 2 H(+). Functionally, catalyzes the methylthiolation of N6-(dimethylallyl)adenosine (i(6)A), leading to the formation of 2-methylthio-N6-(dimethylallyl)adenosine (ms(2)i(6)A) at position 37 in tRNAs that read codons beginning with uridine. This chain is tRNA-2-methylthio-N(6)-dimethylallyladenosine synthase, found in Bacillus cereus (strain AH187).